The following is a 687-amino-acid chain: TWiK family of potassium channels protein 12 (687 aa).

Over 1-21 (MTLFQKLQWFCQLIRLRAYYK) the chain is Cytoplasmic. The helical transmembrane segment at 22–42 (FLLLIAYTLFGAWLFRFYELQ) threads the bilayer. Asn53, Asn77, and Asn98 each carry an N-linked (GlcNAc...) asparagine glycan. The pore-forming intramembrane region spans 112–132 (WTWTGAMFYAGQLYTTIGYGY). The chain crosses the membrane as a helical span at residues 142-162 (ICTVLYALFGIPCFLMYLKAI). The Cytoplasmic segment spans residues 163 to 212 (GKTLSKRLKKIYKRVRRSAFGKFLLPTRVTATKDGFEDPDASAEERKRKP). The chain crosses the membrane as a helical span at residues 213–233 (FPIPIAIILLIIWICFSASMF). Residues 242 to 262 (FPSAVYFFIVSISTVGLGDML) constitute an intramembrane region (pore-forming). The helical transmembrane segment at 270–290 (VFNFLLILFGLALLSMCFELI) threads the bilayer. Residues 291–687 (TDRIAKWKQK…SKRDAPVNIV (397 aa)) lie on the Cytoplasmic side of the membrane. The tract at residues 661–687 (SPSTSTSTSMIDSGYDLSKRDAPVNIV) is disordered. Residues 677-687 (LSKRDAPVNIV) are compositionally biased toward basic and acidic residues.

The protein belongs to the two pore domain potassium channel (TC 1.A.1.8) family.

The protein localises to the membrane. The chain is TWiK family of potassium channels protein 12 from Caenorhabditis briggsae.